Here is a 179-residue protein sequence, read N- to C-terminus: Large ribosomal subunit protein bL17 (179 aa).

Positions R123–R179 are disordered. The span at A154–P168 shows a compositional bias: low complexity. Residues E170–R179 show a composition bias toward polar residues.

This sequence belongs to the bacterial ribosomal protein bL17 family. Part of the 50S ribosomal subunit. Contacts protein L32.

This chain is Large ribosomal subunit protein bL17, found in Tropheryma whipplei (strain Twist) (Whipple's bacillus).